The sequence spans 275 residues: Protein unc-50 homolog (275 aa).

The span at 1 to 26 (MTQYSHVKYTQSPTPSVVSGYSSASR) shows a compositional bias: polar residues. Positions 1–39 (MTQYSHVKYTQSPTPSVVSGYSSASRLHSPLPPPANHRR) are disordered. At 1-99 (MTQYSHVKYT…TKSQFARDDP (99 aa)) the chain is on the cytoplasmic side. Residues 100–120 (AFLVLLVVCLCVTSLGFAYVL) traverse the membrane as a helical segment. At 121–129 (GLSFWQSIS) the chain is on the lumenal side. A helical membrane pass occupies residues 130–150 (FIFYVVFVDCIFVGIIIASFF). Residues 151 to 178 (WAVTNRYLRTNSLEPDIEWGYAFDVHLN) are Cytoplasmic-facing. Residues 179–199 (AFFPPLMLLHFIQLFFYNWLI) form a helical membrane-spanning segment. Over 200–207 (SQTWFISR) the chain is Lumenal. A helical transmembrane segment spans residues 208 to 228 (FLGNTFWLMGMGYYVYITFLG). At 229 to 239 (YNCIPHLKNTR) the chain is on the cytoplasmic side. Residues 240–260 (IILIALPIIFLLFLVVTIIGW) traverse the membrane as a helical segment. Residues 261 to 275 (NATISFVNFYKYRVY) lie on the Lumenal side of the membrane.

It belongs to the unc-50 family.

It is found in the golgi apparatus membrane. Functionally, required for cell surface expression of acetylcholine receptors. In Drosophila melanogaster (Fruit fly), this protein is Protein unc-50 homolog.